Reading from the N-terminus, the 504-residue chain is Anaerobic nitric oxide reductase transcription regulator NorR (504 aa).

Aspartate 57 bears the 4-aspartylphosphate mark. The Sigma-54 factor interaction domain occupies 187-416 (MIGLSPGMTQ…LEHAIHRAVV (230 aa)). Residues 215–222 (GETGTGKE) and 278–287 (ADNGTLFLDE) each bind ATP. A DNA-binding region (H-T-H motif) is located at residues 479 to 498 (WAACARMLETDVANLHRLAK).

Its pathway is nitrogen metabolism; nitric oxide reduction. Its function is as follows. Required for the expression of anaerobic nitric oxide (NO) reductase, acts as a transcriptional activator for at least the norVW operon. Activation also requires sigma-54. This is Anaerobic nitric oxide reductase transcription regulator NorR from Escherichia coli O157:H7.